A 116-amino-acid polypeptide reads, in one-letter code: MAGRRGDSDEDLLKAVRLIKSLYQSNPPPSPEGTRQARRNRRRRWRERQRQIRRCSEWILDTYLGRSVDPVQLQLPPLERLTLDSSEDCGTSGTQGVGSPQVLVESPAVLESGAKE.

Position 8 is a phosphoserine; by host CK2 (Ser8). The homomultimerization stretch occupies residues 18–26 (LIKSLYQSN). Disordered regions lie at residues 20-46 (KSLY…RRWR) and 84-116 (DSSE…GAKE). The Nuclear localization signal and RNA-binding (RRE) motif lies at 34–50 (TRQARRNRRRRWRERQR). Residues 36 to 46 (QARRNRRRRWR) are compositionally biased toward basic residues. The Nuclear export signal and binding to XPO1 motif lies at 73 to 84 (LQLPPLERLTLD). A compositionally biased stretch (polar residues) spans 88-98 (DCGTSGTQGVG). Phosphoserine; by host occurs at positions 92 and 99.

It belongs to the HIV-1 REV protein family. As to quaternary structure, homomultimer; when bound to the RRE. Multimeric assembly is essential for activity and may involve XPO1. Binds to human KPNB1, XPO1, TNPO1, RANBP5 and IPO7. Interacts with the viral Integrase. Interacts with human KHDRBS1. Interacts with human NAP1; this interaction decreases Rev multimerization and stimulates its activity. Interacts with human DEAD-box helicases DDX3 and DDX24; these interactions may serve for viral RNA export to the cytoplasm and packaging, respectively. Interacts with human PSIP1; this interaction may inhibit HIV-1 DNA integration by promoting dissociation of the Integrase-LEDGF/p75 complex. Post-translationally, asymmetrically arginine dimethylated at one site by host PRMT6. Methylation impairs the RNA-binding activity and export of viral RNA from the nucleus to the cytoplasm. Phosphorylated by protein kinase CK2. Presence of, and maybe binding to the N-terminus of the regulatory beta subunit of CK2 is necessary for CK2-mediated Rev's phosphorylation.

The protein localises to the host nucleus. It localises to the host nucleolus. Its subcellular location is the host cytoplasm. Functionally, escorts unspliced or incompletely spliced viral pre-mRNAs (late transcripts) out of the nucleus of infected cells. These pre-mRNAs carry a recognition sequence called Rev responsive element (RRE) located in the env gene, that is not present in fully spliced viral mRNAs (early transcripts). This function is essential since most viral proteins are translated from unspliced or partially spliced pre-mRNAs which cannot exit the nucleus by the pathway used by fully processed cellular mRNAs. Rev itself is translated from a fully spliced mRNA that readily exits the nucleus. Rev's nuclear localization signal (NLS) binds directly to KPNB1/Importin beta-1 without previous binding to KPNA1/Importin alpha-1. KPNB1 binds to the GDP bound form of RAN (Ran-GDP) and targets Rev to the nucleus. In the nucleus, the conversion from Ran-GDP to Ran-GTP dissociates Rev from KPNB1 and allows Rev's binding to the RRE in viral pre-mRNAs. Rev multimerization on the RRE via cooperative assembly exposes its nuclear export signal (NES) to the surface. Rev can then form a complex with XPO1/CRM1 and Ran-GTP, leading to nuclear export of the complex. Conversion from Ran-GTP to Ran-GDP mediates dissociation of the Rev/RRE/XPO1/RAN complex, so that Rev can return to the nucleus for a subsequent round of export. Beside KPNB1, also seems to interact with TNPO1/Transportin-1, RANBP5/IPO5 and IPO7/RANBP7 for nuclear import. The nucleoporin-like HRB/RIP is an essential cofactor that probably indirectly interacts with Rev to release HIV RNAs from the perinuclear region to the cytoplasm. In Human immunodeficiency virus type 1 group M subtype B (isolate RF/HAT3) (HIV-1), this protein is Protein Rev.